The sequence spans 375 residues: Probable serine/threonine-protein kinase PBL28 (375 aa).

Residue threonine 65 is modified to Phosphothreonine. The Protein kinase domain maps to 76 to 356 (FSDENLLGKG…MDCVKELQLI (281 aa)). Residues 82-90 (LGKGGFGRV) and lysine 104 each bind ATP. At tyrosine 152 the chain carries Phosphotyrosine. Aspartate 205 acts as the Proton acceptor in catalysis. Threonine 245 carries the post-translational modification Phosphothreonine. The residue at position 253 (tyrosine 253) is a Phosphotyrosine.

Belongs to the protein kinase superfamily. Ser/Thr protein kinase family.

Its subcellular location is the cell membrane. It catalyses the reaction L-seryl-[protein] + ATP = O-phospho-L-seryl-[protein] + ADP + H(+). The enzyme catalyses L-threonyl-[protein] + ATP = O-phospho-L-threonyl-[protein] + ADP + H(+). Functionally, may be involved in plant defense signaling. In Arabidopsis thaliana (Mouse-ear cress), this protein is Probable serine/threonine-protein kinase PBL28.